We begin with the raw amino-acid sequence, 331 residues long: Phenylalanine--tRNA ligase alpha subunit (331 aa).

Glu-256 serves as a coordination point for Mg(2+).

The protein belongs to the class-II aminoacyl-tRNA synthetase family. Phe-tRNA synthetase alpha subunit type 1 subfamily. As to quaternary structure, tetramer of two alpha and two beta subunits. It depends on Mg(2+) as a cofactor.

It is found in the cytoplasm. It carries out the reaction tRNA(Phe) + L-phenylalanine + ATP = L-phenylalanyl-tRNA(Phe) + AMP + diphosphate + H(+). This is Phenylalanine--tRNA ligase alpha subunit from Colwellia psychrerythraea (strain 34H / ATCC BAA-681) (Vibrio psychroerythus).